The sequence spans 471 residues: Ribonuclease 3 (471 aa).

Basic residues predominate over residues 1–10 (MGSKVAGKKK). 2 disordered regions span residues 1-29 (MGSK…RENI) and 168-189 (NLNE…PTKA). The span at 20–29 (ENGSQQRENI) shows a compositional bias: polar residues. The segment covering 172-184 (KEDEEEDEGEDSY) has biased composition (acidic residues). The region spanning 227-331 (LSGSEMINAH…YIGGLMEDDP (105 aa)) is the RNase III domain. Residues 369-437 (NAKRQLYSLI…AENALRDKKM (69 aa)) enclose the DRBM domain. The interval 451–471 (SESVLKDPSQKNKKRKFSDTS) is disordered. Residues 461–471 (KNKKRKFSDTS) are compositionally biased toward basic residues.

The catalysed reaction is Endonucleolytic cleavage to 5'-phosphomonoester.. Its function is as follows. DsRNA-specific nuclease that cleaves eukaryotic pre-ribosomal RNA at the U3 snoRNP-dependent A0 site in the 5'-external transcribed spacer (ETS) and in the 3'-ETS. In vitro, cleaves synthetic 5'-ETS RNA A0 site in the absence of snoRNA or other factors. Has an essential growth function in addition to pre-rRNA processing. This is Ribonuclease 3 (RNT1) from Saccharomyces cerevisiae (strain ATCC 204508 / S288c) (Baker's yeast).